A 371-amino-acid polypeptide reads, in one-letter code: UDP-N-acetylglucosamine--N-acetylmuramyl-(pentapeptide) pyrophosphoryl-undecaprenol N-acetylglucosamine transferase (371 aa).

UDP-N-acetyl-alpha-D-glucosamine-binding positions include 15-17 (TGG), N126, R172, S199, I256, 275-280 (ALTVSE), and Q301.

Belongs to the glycosyltransferase 28 family. MurG subfamily.

It is found in the cell inner membrane. The catalysed reaction is di-trans,octa-cis-undecaprenyl diphospho-N-acetyl-alpha-D-muramoyl-L-alanyl-D-glutamyl-meso-2,6-diaminopimeloyl-D-alanyl-D-alanine + UDP-N-acetyl-alpha-D-glucosamine = di-trans,octa-cis-undecaprenyl diphospho-[N-acetyl-alpha-D-glucosaminyl-(1-&gt;4)]-N-acetyl-alpha-D-muramoyl-L-alanyl-D-glutamyl-meso-2,6-diaminopimeloyl-D-alanyl-D-alanine + UDP + H(+). The protein operates within cell wall biogenesis; peptidoglycan biosynthesis. In terms of biological role, cell wall formation. Catalyzes the transfer of a GlcNAc subunit on undecaprenyl-pyrophosphoryl-MurNAc-pentapeptide (lipid intermediate I) to form undecaprenyl-pyrophosphoryl-MurNAc-(pentapeptide)GlcNAc (lipid intermediate II). The sequence is that of UDP-N-acetylglucosamine--N-acetylmuramyl-(pentapeptide) pyrophosphoryl-undecaprenol N-acetylglucosamine transferase from Francisella tularensis subsp. mediasiatica (strain FSC147).